We begin with the raw amino-acid sequence, 158 residues long: Transcriptional repressor NrdR (158 aa).

A zinc finger lies at 3–34; it reads CPYCGFEESKVVDSRSTEDHKAIRRRRECLKC. The 91-residue stretch at 49-139 folds into the ATP-cone domain; that stretch reads VLVIKRDSNR…VYRQFKDINT (91 aa).

This sequence belongs to the NrdR family. Zn(2+) serves as cofactor.

Its function is as follows. Negatively regulates transcription of bacterial ribonucleotide reductase nrd genes and operons by binding to NrdR-boxes. The polypeptide is Transcriptional repressor NrdR (Clostridium novyi (strain NT)).